A 205-amino-acid chain; its full sequence is DNA-directed RNA polymerases IV and V subunit 4 (205 aa).

A disordered region spans residues 1–79; it reads MSEKGGKGLK…TKSSKNSLHS (79 aa). A compositionally biased stretch (polar residues) spans 48 to 60; it reads NVSSDQQPFQSSA.

It belongs to the eukaryotic RPB4 RNA polymerase subunit family. Component of the RNA polymerase IV and V complexes. Interacts with NRPD1 and NRPE1. Expressed in shoot meristematic region and in root tips. Detected in cotyledons, flowers and young leaves.

It localises to the nucleus. In terms of biological role, DNA-dependent RNA polymerase catalyzes the transcription of DNA into RNA using the four ribonucleoside triphosphates as substrates. Component of RNA polymerases IV and V which mediate short-interfering RNAs (siRNA) accumulation and subsequent RNA-directed DNA methylation-dependent (RdDM) transcriptional gene silencing (TGS) of endogenous repeated sequences, including transposable elements. Required for the de novo DNA methylation directed by the RdDM pathway. The protein is DNA-directed RNA polymerases IV and V subunit 4 (NRPD4) of Arabidopsis thaliana (Mouse-ear cress).